The following is a 516-amino-acid chain: Histidine ammonia-lyase 1 (516 aa).

Residues 147–149 (SSG) constitute a cross-link (5-imidazolinone (Ser-Gly)). Serine 148 bears the 2,3-didehydroalanine (Ser) mark.

This sequence belongs to the PAL/histidase family. Post-translationally, contains an active site 4-methylidene-imidazol-5-one (MIO), which is formed autocatalytically by cyclization and dehydration of residues Ser-Ser-Gly.

Its subcellular location is the cytoplasm. The enzyme catalyses L-histidine = trans-urocanate + NH4(+). It participates in amino-acid degradation; L-histidine degradation into L-glutamate; N-formimidoyl-L-glutamate from L-histidine: step 1/3. In Fusobacterium nucleatum subsp. nucleatum (strain ATCC 25586 / DSM 15643 / BCRC 10681 / CIP 101130 / JCM 8532 / KCTC 2640 / LMG 13131 / VPI 4355), this protein is Histidine ammonia-lyase 1 (hutH1).